The following is a 773-amino-acid chain: Ethylene receptor 2 (773 aa).

Helical transmembrane passes span 4–24 (EIASWLLILSMVVFVSPVLAI), 53–73 (VSDFLIAVAYFSIPIELLYFV), 82–102 (WVLFEFIAFIVLCGMTHLLHG), and 122–142 (LTALVSCATAITLITLIPLLL). Cu cation is bound by residues C94 and H98. The 145-residue stretch at 187–331 (DRHTILYTTL…VVADQVTVAL (145 aa)) folds into the GAF domain. The Histidine kinase domain maps to 374–614 (TMSEGMRRPM…PETMSLLLRF (241 aa)). The Response regulatory domain maps to 647–766 (QVLLVDTNDS…AMESELRRVL (120 aa)). A 4-aspartylphosphate modification is found at D702. K751 is covalently cross-linked (Glycyl lysine isopeptide (Lys-Gly) (interchain with G-Cter in ubiquitin)).

This sequence belongs to the ethylene receptor family. Heteromer with ETR1. Binds to MRF3/ECIP1. It depends on Cu cation as a cofactor. Autophosphorylated predominantly on Ser residues. Expressed in seedlings, roots, leaves, flowers, mature siliques, shoot apical meristems, leaf primordia, inflorescence meristems, young floral meristems, developing petals, carpels and ovules. Low expression in stamens.

The protein resides in the endoplasmic reticulum membrane. Ethylene receptor related to bacterial two-component regulators. Acts as a redundant negative regulator of ethylene signaling. This Arabidopsis thaliana (Mouse-ear cress) protein is Ethylene receptor 2.